The following is a 31-amino-acid chain: uncharacterized protein (31 aa).

The tract at residues 1–31 (MKKLERMSEVSQMCSEAKKNRKRMSVVSSVA) is disordered.

This is an uncharacterized protein from Sulfolobus islandicus filamentous virus (isolate Iceland/Hveragerdi) (SIFV).